A 570-amino-acid chain; its full sequence is AT-rich interactive domain-containing protein 3A (570 aa).

The segment at 102 to 215 (AGVPNSSSGH…LAPQAQSQHH (114 aa)) is disordered. Residues 120 to 160 (DIDDEDDEDDDPELDRGMDDEERDMDEDDSMNEGGGDEDLE) are compositionally biased toward acidic residues. A Phosphoserine modification is found at Ser-179. The ARID domain maps to 232 to 324 (DEKRKEFLDD…YLYPYECEKR (93 aa)). Phosphoserine is present on Ser-356. Residues 429-523 (AALEQLREKL…GVLFARKPAI (95 aa)) enclose the REKLES domain. The interval 430–473 (ALEQLREKLESGEPPEKKVMLMAEEQQRIMQHALQQNLFAMATQ) is important for nuclear localization. The segment at 475–495 (PMNIKLNNRDDRQETALNLST) is homodimerization. The segment at 519-531 (RKPAIGFMPSSQR) is important for cytoplasmic localization. The disordered stretch occupies residues 528 to 570 (SSQRVHHQHSSQGKSNSPGLSSHIQPSSSASSSASSHGPATSP). Ser-542 and Ser-569 each carry phosphoserine. Low complexity predominate over residues 548–570 (SSHIQPSSSASSSASSHGPATSP).

Homodimer.

The protein resides in the nucleus. It is found in the cytoplasm. In terms of biological role, transcription factor. This Danio rerio (Zebrafish) protein is AT-rich interactive domain-containing protein 3A (arid3a).